The chain runs to 242 residues: UPF0246 protein SP70585_1589 (242 aa).

It belongs to the UPF0246 family.

This chain is UPF0246 protein SP70585_1589, found in Streptococcus pneumoniae (strain 70585).